The following is a 557-amino-acid chain: Arginine--tRNA ligase (557 aa).

The short motif at 128–138 is the 'HIGH' region element; the sequence is ANPTGPLHVGH.

It belongs to the class-I aminoacyl-tRNA synthetase family. Monomer.

It is found in the cytoplasm. It carries out the reaction tRNA(Arg) + L-arginine + ATP = L-arginyl-tRNA(Arg) + AMP + diphosphate. In Thiobacillus denitrificans (strain ATCC 25259 / T1), this protein is Arginine--tRNA ligase.